Consider the following 617-residue polypeptide: AUGMIN subunit 3 (617 aa).

3 coiled-coil regions span residues 107–140 (DATL…SSAL), 314–334 (LHSL…LYQK), and 481–504 (AIIQ…ENSL).

It belongs to the HAUS3 family. In terms of assembly, part of the augmin complex composed of 8 subunits. The complex acts on microtubules and interacts with gamma-tubulin in spindles and the phragmoplast. Interacts with AUG1.

The protein localises to the cytoplasm. Its subcellular location is the cytoskeleton. The protein resides in the spindle. It localises to the phragmoplast. Involved in microtubules reorganization during spindle and phragmoplast development. Required for gamma-tubulin localization during mitosis. This Arabidopsis thaliana (Mouse-ear cress) protein is AUGMIN subunit 3.